A 311-amino-acid polypeptide reads, in one-letter code: MSQNQEISKKEQYNLNKLQKRLRRNVGEAIADFNMIEEGDRIMVCLSGGKDSYTMLEILRNLQQSAPINFSLVAVNLDQKQPGFPEHVLPEYLETLGVEYKIVEENTYGIVKEKIPEGKTTCSLCSRLRRGILYRTATELGATKIALGHHRDDILQTLFLNMFYGGKMKGMPPKLMSDDGKHIVIRPLAYCREKDIQRFADAKAFPIIPCNLCGSQPNLQRQVIADMLRDWDKRYPGRIETMFSAMQNVVPSHLCDTNLFDFKGITHGSEVVNGGDLAFDREEIPLQPAGWQPEEDENQLDELRLNVVEVK.

A PP-loop motif motif is present at residues 47–52 (SGGKDS). 3 residues coordinate [4Fe-4S] cluster: C122, C125, and C213.

Belongs to the TtcA family. Homodimer. The cofactor is Mg(2+). [4Fe-4S] cluster serves as cofactor.

It localises to the cytoplasm. The catalysed reaction is cytidine(32) in tRNA + S-sulfanyl-L-cysteinyl-[cysteine desulfurase] + AH2 + ATP = 2-thiocytidine(32) in tRNA + L-cysteinyl-[cysteine desulfurase] + A + AMP + diphosphate + H(+). Its pathway is tRNA modification. In terms of biological role, catalyzes the ATP-dependent 2-thiolation of cytidine in position 32 of tRNA, to form 2-thiocytidine (s(2)C32). The sulfur atoms are provided by the cysteine/cysteine desulfurase (IscS) system. In Escherichia coli (strain SMS-3-5 / SECEC), this protein is tRNA-cytidine(32) 2-sulfurtransferase.